We begin with the raw amino-acid sequence, 240 residues long: 2,3,4,5-tetrahydropyridine-2,6-dicarboxylate N-acetyltransferase (240 aa).

It belongs to the transferase hexapeptide repeat family. DapH subfamily.

It catalyses the reaction (S)-2,3,4,5-tetrahydrodipicolinate + acetyl-CoA + H2O = L-2-acetamido-6-oxoheptanedioate + CoA. It functions in the pathway amino-acid biosynthesis; L-lysine biosynthesis via DAP pathway; LL-2,6-diaminopimelate from (S)-tetrahydrodipicolinate (acetylase route): step 1/3. Catalyzes the transfer of an acetyl group from acetyl-CoA to tetrahydrodipicolinate. The chain is 2,3,4,5-tetrahydropyridine-2,6-dicarboxylate N-acetyltransferase from Shouchella clausii (strain KSM-K16) (Alkalihalobacillus clausii).